A 112-amino-acid polypeptide reads, in one-letter code: UPF0375 protein R05A10.4 (112 aa).

A signal peptide spans 1–19 (MNLSIFSAIIFSITIASSA). The N-linked (GlcNAc...) asparagine glycan is linked to Asn-59.

It belongs to the UPF0375 family.

The protein localises to the secreted. In Caenorhabditis elegans, this protein is UPF0375 protein R05A10.4.